The primary structure comprises 368 residues: Large ribosomal subunit protein bL27m (368 aa).

The transit peptide at 1–20 (MFSGLHTSKYACQVVVQIRT) directs the protein to the mitochondrion. Residues 23-44 (KRAAGSRTSMKDSAGRRLGPKK) form a disordered region. Positions 31–44 (SMKDSAGRRLGPKK) are enriched in basic and acidic residues.

The protein belongs to the bacterial ribosomal protein bL27 family.

The protein resides in the mitochondrion. Component of the large subunit of mitochondrial ribosome. This is Large ribosomal subunit protein bL27m (MRPL2) from Candida glabrata (strain ATCC 2001 / BCRC 20586 / JCM 3761 / NBRC 0622 / NRRL Y-65 / CBS 138) (Yeast).